A 437-amino-acid chain; its full sequence is tRNA-2-methylthio-N(6)-dimethylallyladenosine synthase (437 aa).

Positions 1-115 (MKVYIETMGC…ISQVIHKEKA (115 aa)) constitute an MTTase N-terminal domain. Residues cysteine 10, cysteine 46, cysteine 78, cysteine 148, cysteine 152, and cysteine 155 each contribute to the [4Fe-4S] cluster site. Residues 134 to 367 (KKAQIRSLLN…QNRHKEILEE (234 aa)) enclose the Radical SAM core domain. In terms of domain architecture, TRAM spans 370 to 436 (KLEVGKTHVV…KGRLIATAKG (67 aa)).

It belongs to the methylthiotransferase family. MiaB subfamily. In terms of assembly, monomer. [4Fe-4S] cluster serves as cofactor.

The protein resides in the cytoplasm. It carries out the reaction N(6)-dimethylallyladenosine(37) in tRNA + (sulfur carrier)-SH + AH2 + 2 S-adenosyl-L-methionine = 2-methylsulfanyl-N(6)-dimethylallyladenosine(37) in tRNA + (sulfur carrier)-H + 5'-deoxyadenosine + L-methionine + A + S-adenosyl-L-homocysteine + 2 H(+). Catalyzes the methylthiolation of N6-(dimethylallyl)adenosine (i(6)A), leading to the formation of 2-methylthio-N6-(dimethylallyl)adenosine (ms(2)i(6)A) at position 37 in tRNAs that read codons beginning with uridine. This chain is tRNA-2-methylthio-N(6)-dimethylallyladenosine synthase, found in Helicobacter pylori (strain Shi470).